Consider the following 476-residue polypeptide: Membrane-bound lytic murein transglycosylase F (476 aa).

The signal sequence occupies residues 1-16 (MIKTLFIILLCGILSA). Residues 17–259 (CQPVDIQDVD…HLNEKYFGHV (243 aa)) are non-LT domain. An LT domain region spans residues 260-476 (KRFDYVDTRA…VPAKSHVSAQ (217 aa)). Residue Glu-304 is part of the active site.

In the N-terminal section; belongs to the bacterial solute-binding protein 3 family. It in the C-terminal section; belongs to the transglycosylase Slt family.

It localises to the cell outer membrane. The enzyme catalyses Exolytic cleavage of the (1-&gt;4)-beta-glycosidic linkage between N-acetylmuramic acid (MurNAc) and N-acetylglucosamine (GlcNAc) residues in peptidoglycan, from either the reducing or the non-reducing ends of the peptidoglycan chains, with concomitant formation of a 1,6-anhydrobond in the MurNAc residue.. Functionally, murein-degrading enzyme that degrades murein glycan strands and insoluble, high-molecular weight murein sacculi, with the concomitant formation of a 1,6-anhydromuramoyl product. Lytic transglycosylases (LTs) play an integral role in the metabolism of the peptidoglycan (PG) sacculus. Their lytic action creates space within the PG sacculus to allow for its expansion as well as for the insertion of various structures such as secretion systems and flagella. This chain is Membrane-bound lytic murein transglycosylase F, found in Shewanella frigidimarina (strain NCIMB 400).